Reading from the N-terminus, the 91-residue chain is Mercuric transport protein periplasmic component (91 aa).

Positions 1–19 are cleaved as a signal peptide; it reads MKKLFASLALAAAVAPVWA. The region spanning 22–88 is the HMA domain; it reads QTVTLAVPGM…ATADAGYPSS (67 aa). Cys-33 and Cys-36 together coordinate Hg(2+).

Belongs to the MerP family. In terms of assembly, monomer.

It localises to the periplasm. In terms of biological role, involved in mercury resistance. Acts as a mercury scavenger that specifically binds to a mercuric ion in the periplasm and probably passes it to the cytoplasmic mercuric reductase MerA via the mercuric transport protein MerT. The sequence is that of Mercuric transport protein periplasmic component from Shigella flexneri.